A 276-amino-acid chain; its full sequence is MGDNRNLPVTQPNSINFNVVILSIFFSGSFIGAWAFFNRFLKQYTKATEIPQNVFRKRWLFGKVTAVGDGDNFHFFHAPGGLIAGWGWLRPLPELNKSDPPISSSKVGSSVPIHRRIFDSIFGRNKTRTAYSNYFLGLPVPYKNKRNLPTISIRICGVDAPERAHFGNPAQPFSEEALIWLRHTLIGKCVWIKPLAVDQYNRCVAKVEYWTWTGWKNVSLEMVKQGLAVVYESKTSAEFDGEEDKYRFHEMAAKARRRGIWSQKQFETPGEYKRRI.

A helical membrane pass occupies residues Phe17–Phe37. The 206-residue stretch at Arg58 to Gln263 folds into the TNase-like domain. Arg154 is an active-site residue. Residue Asp159 coordinates Ca(2+). Active-site residues include Glu162 and Arg202.

The protein belongs to the LCL3 family.

The protein resides in the mitochondrion. It localises to the membrane. The chain is Probable endonuclease LCL3 (LCL3) from Zygosaccharomyces rouxii (strain ATCC 2623 / CBS 732 / NBRC 1130 / NCYC 568 / NRRL Y-229).